We begin with the raw amino-acid sequence, 347 residues long: NADH-ubiquinone oxidoreductase chain 2 (347 aa).

Transmembrane regions (helical) follow at residues 1–21 (MNPL…MIVM), 25–45 (HWLT…PILM), 59–79 (YFLT…INLL), 96–116 (IIMT…FWVP), 122–142 (IQLS…MSIL), 145–165 (IFPT…VAIG), 178–198 (IMAY…AYNP), 201–221 (TLLN…MFML), 237–257 (APLL…LPPL), 276–296 (IITP…YMRL), and 326–346 (VSPL…LMLL).

This sequence belongs to the complex I subunit 2 family. As to quaternary structure, core subunit of respiratory chain NADH dehydrogenase (Complex I) which is composed of 45 different subunits. Interacts with TMEM242.

The protein localises to the mitochondrion inner membrane. It catalyses the reaction a ubiquinone + NADH + 5 H(+)(in) = a ubiquinol + NAD(+) + 4 H(+)(out). Its function is as follows. Core subunit of the mitochondrial membrane respiratory chain NADH dehydrogenase (Complex I) which catalyzes electron transfer from NADH through the respiratory chain, using ubiquinone as an electron acceptor. Essential for the catalytic activity and assembly of complex I. This Boneia bidens (Manado fruit bat) protein is NADH-ubiquinone oxidoreductase chain 2.